Here is a 463-residue protein sequence, read N- to C-terminus: tRNA (guanine(10)-N(2))-methyltransferase TRMT11 (463 aa).

Ala-2 is subject to N-acetylalanine.

Belongs to the class I-like SAM-binding methyltransferase superfamily. TRM11 methyltransferase family. In terms of assembly, part of the heterodimeric TRMT11-TRM112 methyltransferase complex; this complex forms an active tRNA methyltransferase, where TRMT112 acts as an activator of the catalytic subunit TRMT11.

It localises to the cytoplasm. It catalyses the reaction guanosine(10) in tRNA + S-adenosyl-L-methionine = N(2)-methylguanosine(10) in tRNA + S-adenosyl-L-homocysteine + H(+). In terms of biological role, catalytic subunit of the TRMT11-TRM112 methyltransferase complex, that specifically mediates the S-adenosyl-L-methionine-dependent N(2)-methylation of guanosine nucleotide at position 10 (m2G10) in tRNAs. This is one of the major tRNA (guanine-N(2))-methyltransferases. In Rattus norvegicus (Rat), this protein is tRNA (guanine(10)-N(2))-methyltransferase TRMT11.